The chain runs to 113 residues: Large ribosomal subunit protein uL22 (113 aa).

Belongs to the universal ribosomal protein uL22 family. Part of the 50S ribosomal subunit.

Functionally, this protein binds specifically to 23S rRNA; its binding is stimulated by other ribosomal proteins, e.g. L4, L17, and L20. It is important during the early stages of 50S assembly. It makes multiple contacts with different domains of the 23S rRNA in the assembled 50S subunit and ribosome. The globular domain of the protein is located near the polypeptide exit tunnel on the outside of the subunit, while an extended beta-hairpin is found that lines the wall of the exit tunnel in the center of the 70S ribosome. The sequence is that of Large ribosomal subunit protein uL22 from Halalkalibacterium halodurans (strain ATCC BAA-125 / DSM 18197 / FERM 7344 / JCM 9153 / C-125) (Bacillus halodurans).